A 271-amino-acid chain; its full sequence is Tryptophan synthase alpha chain (271 aa).

Catalysis depends on proton acceptor residues glutamate 49 and aspartate 60.

Belongs to the TrpA family. Tetramer of two alpha and two beta chains.

It catalyses the reaction (1S,2R)-1-C-(indol-3-yl)glycerol 3-phosphate + L-serine = D-glyceraldehyde 3-phosphate + L-tryptophan + H2O. It participates in amino-acid biosynthesis; L-tryptophan biosynthesis; L-tryptophan from chorismate: step 5/5. Functionally, the alpha subunit is responsible for the aldol cleavage of indoleglycerol phosphate to indole and glyceraldehyde 3-phosphate. This chain is Tryptophan synthase alpha chain, found in Burkholderia cenocepacia (strain ATCC BAA-245 / DSM 16553 / LMG 16656 / NCTC 13227 / J2315 / CF5610) (Burkholderia cepacia (strain J2315)).